We begin with the raw amino-acid sequence, 170 residues long: Lipoprotein signal peptidase (170 aa).

Helical transmembrane passes span 11–31, 41–61, 69–89, and 95–115; these read LSWL…KFYF, IVVI…AAFS, WQRW…VVWL, and NETW…GNLY. Catalysis depends on residues Asp-125 and Asp-144. Residues 136-156 traverse the membrane as a helical segment; that stretch reads YFPAFNFADSAITVGAVMLAL.

The protein belongs to the peptidase A8 family.

It is found in the cell inner membrane. The catalysed reaction is Release of signal peptides from bacterial membrane prolipoproteins. Hydrolyzes -Xaa-Yaa-Zaa-|-(S,diacylglyceryl)Cys-, in which Xaa is hydrophobic (preferably Leu), and Yaa (Ala or Ser) and Zaa (Gly or Ala) have small, neutral side chains.. It functions in the pathway protein modification; lipoprotein biosynthesis (signal peptide cleavage). Functionally, this protein specifically catalyzes the removal of signal peptides from prolipoproteins. This is Lipoprotein signal peptidase from Pseudomonas fluorescens (strain Pf0-1).